The following is a 366-amino-acid chain: Glutamate 5-kinase (366 aa).

Lys-17 is a binding site for ATP. Residues Ser-57, Asp-144, and Asn-156 each coordinate substrate. ATP-binding positions include 176-177 (SD) and 216-222 (TGGMASK). The PUA domain maps to 278–352 (QGILHIDEGA…GKSTQELPAE (75 aa)).

This sequence belongs to the glutamate 5-kinase family.

The protein localises to the cytoplasm. The enzyme catalyses L-glutamate + ATP = L-glutamyl 5-phosphate + ADP. Its pathway is amino-acid biosynthesis; L-proline biosynthesis; L-glutamate 5-semialdehyde from L-glutamate: step 1/2. Functionally, catalyzes the transfer of a phosphate group to glutamate to form L-glutamate 5-phosphate. In Rhodococcus jostii (strain RHA1), this protein is Glutamate 5-kinase.